Consider the following 688-residue polypeptide: PR domain zinc finger protein 8 (688 aa).

One can recognise an SET domain in the interval 16–131; sequence KAVQQCLTDI…KDEELLVWYG (116 aa). S-adenosyl-L-methionine is bound at residue Tyr130. The C2H2-type 1 zinc-finger motif lies at 154 to 182; it reads YTCLECSQRFQFEFPYVAHLRFRCPKRLH. 2 disordered regions span residues 184 to 309 and 397 to 506; these read TDAN…GCKG and EEAA…PARS. Positions 192–208 are enriched in gly residues; that stretch reads QGGGLGTKDHGGGGGGK. Composition is skewed to low complexity over residues 209–219 and 275–284; these read EQQQQQQQQQQ and GSSSCVAAPG. 2 stretches are compositionally biased toward gly residues: residues 414–424 and 470–489; these read AGGGVAGGGSN and LGGG…GGGQ. 2 C2H2-type zinc fingers span residues 624–647 and 665–687; these read NWCA…RSHH and LKCP…MTSH.

This sequence belongs to the class V-like SAM-binding methyltransferase superfamily. In terms of assembly, interacts with BHLHE22. Interacts with EPM2A and NHLRC1. This interaction sequesters EPM2A and NHLRC1 to the nucleus. Expressed in brain, heart, liver, testes, retina. Highest expression is observed in the retina and hippocampus; moderately expressed in the cortex and cerebellum. In the retina, it is expressed in bipolar and amacrine cells.

The protein resides in the nucleus. Its function is as follows. Probable histone methyltransferase, preferentially acting on 'Lys-9' of histone H3. Histone methyltransferase activity has not been confirmed in other species. Involved in the control of steroidogenesis through transcriptional repression of steroidogenesis marker genes such as CYP17A1 and LHCGR. Forms with BHLHE22 a transcriptional repressor complex controlling genes involved in neural development and neuronal differentiation. In the retina, it is required for rod bipolar and type 2 OFF-cone bipolar cell survival. This is PR domain zinc finger protein 8 (Prdm8) from Mus musculus (Mouse).